We begin with the raw amino-acid sequence, 515 residues long: Mucin-like protein Glc1.8a (515 aa).

Residues 1 to 20 (MSQITLIILILAIGFSCTKS) form the signal peptide. Residues 21–467 (HPINSTRDGE…ANDIKKPAFP (447 aa)) lie on the Extracellular side of the membrane. 28 N-linked (GlcNAc...) asparagine; by host glycosylation sites follow: Asn-24, Asn-45, Asn-51, Asn-60, Asn-85, Asn-93, Asn-102, Asn-123, Asn-129, Asn-138, Asn-180, Asn-201, Asn-207, Asn-216, Asn-258, Asn-279, Asn-285, Asn-319, Asn-327, Asn-336, Asn-357, Asn-363, Asn-372, Asn-397, Asn-405, Asn-413, Asn-434, and Asn-441. The segment at 80–114 (SKKDENITGQSEINTSAKSQPINSTRDGEDSGTDL) is disordered. The span at 86-104 (ITGQSEINTSAKSQPINST) shows a compositional bias: polar residues. The segment at 314–358 (SKKDENVTGQSEINTSAKSQPINSTRDGEDSGTDLKNLLTDPANT) is disordered. The segment covering 320–338 (VTGQSEINTSAKSQPINST) has biased composition (polar residues). Positions 393-413 (RKDENVTGQSEFNISTNSNLN) are disordered. The chain crosses the membrane as a helical span at residues 468-488 (YCIILITFQIVTVGMIIYLVF). At 489–515 (RTMRKPCQSERAIPLNTFGFGNNSSHE) the chain is on the cytoplasmic side.

It belongs to the polydnaviridae Glc1.8 protein family.

The protein resides in the host membrane. Its function is as follows. Involved in suppression of the insect cellular immune response. Inhibits host hemocyte adhesion and phagocytosis. The chain is Mucin-like protein Glc1.8a (O9) from Microplitis demolitor (Parasitoid wasp).